The chain runs to 171 residues: Small ribosomal subunit protein uS13 (171 aa).

2 disordered regions span residues 1-22 (MGKA…AAKK) and 142-171 (RHEK…RKKE). The span at 10–22 (KSDKEAAKPAAKK) shows a compositional bias: basic and acidic residues. The segment covering 142–158 (RHEKGKKVRGQRTRSNG) has biased composition (basic residues).

Belongs to the universal ribosomal protein uS13 family. As to quaternary structure, part of the 30S ribosomal subunit. Forms a loose heterodimer with protein S19. Forms two bridges to the 50S subunit in the 70S ribosome.

Located at the top of the head of the 30S subunit, it contacts several helices of the 16S rRNA. In the 70S ribosome it contacts the 23S rRNA (bridge B1a) and protein L5 of the 50S subunit (bridge B1b), connecting the 2 subunits; these bridges are implicated in subunit movement. This is Small ribosomal subunit protein uS13 from Thermoplasma volcanium (strain ATCC 51530 / DSM 4299 / JCM 9571 / NBRC 15438 / GSS1).